Here is a 263-residue protein sequence, read N- to C-terminus: Small ribosomal subunit protein uS3 (263 aa).

Residues 40–108 (IRNYLFKKFH…HIKVDVDVLE (69 aa)) enclose the KH type-2 domain. A disordered region spans residues 224–263 (KPKGSEANHQRRNSNKSKDYRDNKNKQFNKNHQNQQPAKE). Over residues 239–248 (KSKDYRDNKN) the composition is skewed to basic and acidic residues. Over residues 249-263 (KQFNKNHQNQQPAKE) the composition is skewed to low complexity.

This sequence belongs to the universal ribosomal protein uS3 family. Part of the 30S ribosomal subunit. Forms a tight complex with proteins S10 and S14.

Binds the lower part of the 30S subunit head. Binds mRNA in the 70S ribosome, positioning it for translation. In Mycoplasmoides gallisepticum (strain R(low / passage 15 / clone 2)) (Mycoplasma gallisepticum), this protein is Small ribosomal subunit protein uS3.